We begin with the raw amino-acid sequence, 600 residues long: L-galactono-1,4-lactone dehydrogenase, mitochondrial (600 aa).

The N-terminal 25 residues, 1–25, are a transit peptide targeting the mitochondrion; sequence MLRSLLLRRSNARSLRPPFPPLRTL. Residues 16–51 form a disordered region; the sequence is RPPFPPLRTLCTSGQTLTPAPPPPPPPPPPISSSAS. Positions 26-91 are cleaved as a propeptide — removed in mature form; the sequence is CTSGQTLTPA…AKHKKAQIFR (66 aa). The span at 34–46 shows a compositional bias: pro residues; it reads PAPPPPPPPPPPI. The helical transmembrane segment at 58-74 threads the bilayer; that stretch reads YAGYAALALFSGAATYF. The 172-residue stretch at 108-279 folds into the FAD-binding PCMH-type domain; the sequence is THEVQTRNFN…AEVTLQCVER (172 aa).

FAD serves as cofactor.

The protein resides in the mitochondrion membrane. It carries out the reaction L-galactono-1,4-lactone + 4 Fe(III)-[cytochrome c] = L-dehydroascorbate + 4 Fe(II)-[cytochrome c] + 5 H(+). Its pathway is cofactor biosynthesis; L-ascorbate biosynthesis. With respect to regulation, inhibited by sulfhydryl-modifying agents such as N-ethylmaleimide, monoiodoacetic acid and p-hydroxymercuribenzoic acid. No inhibition by riboflavin and lycorine. Involved in the biosynthesis of ascorbic acid. Uses L-galactono-1,4-lactone as substrate, but not L-gulono-1,4-lactone, D-galactono-1,4-lactone, D-gulono-1,4-lactone, D-erythronic-1,4-lactone, D-xylonic-1,4-lactone, L-mannono-1,4-lactone, D-galactonic acid, D-glucuronic acid or D-gluconic acid. FAD, NAD, NADP and O(2) cannot act as electron acceptor. This Brassica oleracea (Wild cabbage) protein is L-galactono-1,4-lactone dehydrogenase, mitochondrial.